The sequence spans 457 residues: Multidrug resistance protein MdtK (457 aa).

Residues 1 to 10 (MQKYISEARL) lie on the Cytoplasmic side of the membrane. Residues 11–31 (LLALAIPVILAQIAQTAMGFV) traverse the membrane as a helical segment. At 32 to 52 (DTVMAGGYSATDMAAVAIGTS) the chain is on the periplasmic side. A helical transmembrane segment spans residues 53–73 (IWLPAILFGHGLLLALTPVIA). The Cytoplasmic portion of the chain corresponds to 74 to 92 (QLNGSGRRERIAHQVRQGF). A helical membrane pass occupies residues 93–113 (WLAGFVSVLIMLVLWNAGYII). Over 114-126 (RSMENIDPALADK) the chain is Periplasmic. Residues 127–147 (AVGYLRALLWGAPGYLFFQVA) traverse the membrane as a helical segment. Topologically, residues 148–159 (RNQCEGLAKTKP) are cytoplasmic. A helical membrane pass occupies residues 160–180 (GMVMGFIGLLVNIPVNYIFIY). At 181–191 (GHFGMPELSGV) the chain is on the periplasmic side. Residues 192-212 (GCGVATAAVYWAMFLAMVSYI) form a helical membrane-spanning segment. Topologically, residues 213-242 (KRARSMRDIRNEKGTAKPDPAVMKRLIQLG) are cytoplasmic. A helical transmembrane segment spans residues 243 to 263 (LPIALALFFEVTLFAVVALLV). Residues 264–275 (SPLGIVDVAGHQ) lie on the Periplasmic side of the membrane. Residues 276-296 (IALNFSSLMFVLPMSLAAAVT) form a helical membrane-spanning segment. Residues 297–313 (IRVGYRLGQGSTLDAQT) are Cytoplasmic-facing. The chain crosses the membrane as a helical span at residues 314–334 (AARTGLMVGVCMATLTAIFTV). Residues 335 to 349 (SLREQIALLYNDNPE) lie on the Periplasmic side of the membrane. Residues 350–370 (VVTLAAHLMLLAAVYQISDSI) form a helical membrane-spanning segment. At 371–386 (QVIGSGILRGYKDTRS) the chain is on the cytoplasmic side. The chain crosses the membrane as a helical span at residues 387–407 (IFYITFTAYWVLGLPSGYILA). Over 408–417 (LTDLVVEPMG) the chain is Periplasmic. Residues 418–438 (PAGFWIGFIIGLTSAAIMMML) traverse the membrane as a helical segment. Over 439–457 (RMRFLQRLPSAIILQRASR) the chain is Cytoplasmic.

Belongs to the multi antimicrobial extrusion (MATE) (TC 2.A.66.1) family. MdtK subfamily.

It is found in the cell inner membrane. In terms of biological role, multidrug efflux pump that functions probably as a Na(+)/drug antiporter. The chain is Multidrug resistance protein MdtK from Shigella dysenteriae serotype 1 (strain Sd197).